We begin with the raw amino-acid sequence, 1940 residues long: Rho GTPase-activating protein 32 (1940 aa).

Residues 154–248 enclose the PX; atypical domain; it reads SKELVFLVQI…LTWMEIDNKG (95 aa). The 63-residue stretch at 262–324 folds into the SH3 domain; sequence PAIAAAHVIK…PSECVELIND (63 aa). The Rho-GAP domain maps to 375-570; that stretch reads CDLGEHLLNS…FILNHVEVLF (196 aa). Disordered stretches follow at residues 646-746, 1035-1163, 1219-1264, 1430-1454, and 1675-1786; these read FPSE…LSAS, RANQ…FSVT, FTTG…PPVR, KHPR…YTED, and RSRS…HSSA. Polar residues predominate over residues 1047–1061; sequence PQGASASESPQELSH. 2 stretches are compositionally biased toward low complexity: residues 1081–1094 and 1145–1163; these read LALA…QASA and SRKT…FSVT. The segment covering 1691–1707 has biased composition (basic and acidic residues); that stretch reads ETKDVRYPGRTEGDERT. Positions 1725 to 1734 are enriched in polar residues; the sequence is PQKQSGSSRS. The span at 1736–1755 shows a compositional bias: basic and acidic residues; it reads MQHDISTEQHSQDTLHRQPS.

It belongs to the PX domain-containing GAP family.

Its subcellular location is the cytoplasm. It is found in the membrane. The protein localises to the cell membrane. GTPase-activating protein (GAP) promoting GTP hydrolysis on RHOA, CDC42 and RAC1 small GTPases. In Xenopus laevis (African clawed frog), this protein is Rho GTPase-activating protein 32 (arhgap32).